The primary structure comprises 242 residues: Segregation and condensation protein A (242 aa).

This sequence belongs to the ScpA family. Component of a cohesin-like complex composed of ScpA, ScpB and the Smc homodimer, in which ScpA and ScpB bind to the head domain of Smc. The presence of the three proteins is required for the association of the complex with DNA.

It is found in the cytoplasm. Functionally, participates in chromosomal partition during cell division. May act via the formation of a condensin-like complex containing Smc and ScpB that pull DNA away from mid-cell into both cell halves. The chain is Segregation and condensation protein A from Streptococcus pneumoniae serotype 19F (strain G54).